The following is a 415-amino-acid chain: Adipocyte plasma membrane-associated protein (415 aa).

The segment at 1–29 (MSEADGLRQRRPLRPQVVTDDGQVPEVKE) is disordered. At Ser-2 the chain carries N-acetylserine. At 2 to 39 (SEADGLRQRRPLRPQVVTDDGQVPEVKEGSSFSGRVFR) the chain is on the cytoplasmic side. Thr-19 carries the post-translational modification Phosphothreonine. The helical; Signal-anchor for type II membrane protein transmembrane segment at 40 to 60 (MTFLMLAVSLAIPLLGAMMLL) threads the bilayer. The Extracellular segment spans residues 61-415 (ESPIDPQSFS…FICRLSLQSI (355 aa)). Asn-159 carries an N-linked (GlcNAc...) asparagine glycan.

The protein belongs to the strictosidine synthase family. In terms of processing, glycosylated in vitro. Strongly expressed in adipose tissue. Highly expressed in liver, heart, and kidney. Expressed at intermediate level in brain and lung. Weakly expressed in spleen, skeletal muscle and testis.

Its subcellular location is the membrane. In terms of biological role, exhibits strong arylesterase activity with beta-naphthyl acetate and phenyl acetate. May play a role in adipocyte differentiation. This Mus musculus (Mouse) protein is Adipocyte plasma membrane-associated protein (Apmap).